We begin with the raw amino-acid sequence, 881 residues long: MSNTEKNLPTKYDHMSVEEGLYQWWLEGKYFEATGDEKKQPYTIVIPPPNVTGKLHLGHAWDTTLQDILTRTKRMQGYDVLWLPGMDHAGIATQAKVEGKLREEGISRYDLGREKFLEKAWEWKEEYASHIRQQWGKVGLGLDYSRERFTLDKGLSDAVNKVFVQLYEKGLIYRGEYIINWDPATRTALSDIEVIHKEVQGAFYHMNYPLTDGSGHIRLATTRPETMLGDTAVAVHPEDDRYKHLIGKTVTLPIVGREIPIIADEYVEKDFGTGVVKITPAHDPNDFEVGNRHDLPRILVMNEDGSMNEKAGKYNGMDRFECRKELVKDLQEAGVLVEIEPHMHSVGHSERSGAVVEPYLSTQWFVKMAPLAEKAVALQQKEEEKVTFVPERFENTYLRWMENIHDWCISRQLWWGHRIPAWYHKETGEVYVGTEAPADIENWNQDNDVLDTWFSSALWPFSTLGWPNEDSADFKRYYSTDALVTGYDIIFFWVSRMIFQGLEFTGERPFKDVLIHGLVRDEQGRKMSKSLGNGIDPMDVIEKYGADAMRFFLSTGSAPGQDLRFSMEKVESTWNFINKIWNASRFVLMNMDDMKYEEIDLTGEKSVADKWILTRLNETIESVTRNMDKYEFGEAGRSLYNFIWDDFCDWYIEMAKLPLYGEDEAAKKTTRSILAYVLDQTMRLLHPFMPFVTEKIWQHLPHEGESITVAAWPTVREDLQDTEAAAEMHLLVDIIRSVRNIRAEVNTPMSKKVQMQIKAKDEAVLAQLTKNSSYIERFCNPSELTIQTDLQAPEKAMTAIVSGAELFLPLADLINLDEERARLEKELEKFDKEVERVQKKLSNQGFVAKAPAAVIEGERAKEQDYLEKREAVRQRLADLEK.

Positions 49 to 59 match the 'HIGH' region motif; sequence PNVTGKLHLGH. The 'KMSKS' region signature appears at 526 to 530; that stretch reads KMSKS. An ATP-binding site is contributed by lysine 529. The stretch at 810–881 forms a coiled coil; that stretch reads LADLINLDEE…VRQRLADLEK (72 aa).

It belongs to the class-I aminoacyl-tRNA synthetase family. ValS type 1 subfamily. In terms of assembly, monomer.

The protein resides in the cytoplasm. The enzyme catalyses tRNA(Val) + L-valine + ATP = L-valyl-tRNA(Val) + AMP + diphosphate. Catalyzes the attachment of valine to tRNA(Val). As ValRS can inadvertently accommodate and process structurally similar amino acids such as threonine, to avoid such errors, it has a 'posttransfer' editing activity that hydrolyzes mischarged Thr-tRNA(Val) in a tRNA-dependent manner. The protein is Valine--tRNA ligase of Bacillus cereus (strain ATCC 14579 / DSM 31 / CCUG 7414 / JCM 2152 / NBRC 15305 / NCIMB 9373 / NCTC 2599 / NRRL B-3711).